The sequence spans 999 residues: Golgin subfamily A member 2 (999 aa).

The segment covering 1 to 11 (MWPPRFPPPRP) has biased composition (pro residues). 2 disordered regions span residues 1 to 80 (MWPP…PAPP) and 244 to 288 (ARQK…YNKD). Positions 1 to 86 (MWPPRFPPPR…PAPPTAATDT (86 aa)) are interaction with p115/USO1. Arginine 18 and arginine 30 each carry dimethylated arginine. Positions 26–49 (KKKLREYQQKNSPGVPAGAKKKKK) match the Nuclear localization signal motif. 4 positions are modified to phosphoserine: serine 37, serine 66, serine 273, and serine 438. Residues 147 to 895 (LTSSNMKELE…VLRLVNERNE (749 aa)) adopt a coiled-coil conformation. The span at 271–280 (TLSTVSTQQK) shows a compositional bias: polar residues. A disordered region spans residues 444–468 (SQMEEPPPPEPPAGPSEAEEQLQGE). Residues 448–457 (EPPPPEPPAG) are compositionally biased toward pro residues. A phosphoserine mark is found at serine 697, serine 934, and serine 978. The interval 989–999 (DENDEVKIMVV) is interaction with GORASP1/GRASP65.

It belongs to the GOLGA2 family. In terms of assembly, homodimer, may assemble into homohexamers. Homotetramer; forms a parallel homotetramer with a flexible rod-like structure that can give rise to I- and Y-shaped conformations. Interacts with GORASP1/GRASP65. The homooligomer forms a complex with GORASP1 with a 1:1 stoichiometry. Interacts with RAB1B that has been activated by GTP-binding. Interacts with p115/USO1; interaction with p115/USO1 inhibits interaction with STX5 and/or RAB1B. Interacts with STX5. Interacts with ZFPL1. Interacts with AKAP450/AKAP9; leading to recruit AKAP450/AKAP9 to the cis-Golgi. In terms of processing, phosphorylated at Ser-37 by CDK1 at the onset of mitosis, inhibiting the interaction with p115/USO1 and triggering Golgi disassembly. A report however suggests that Golgi disassembly is independent of phosphorylation at Ser-37. Phosphorylated at Ser-37 in prophase as the Golgi complex starts to break down, and remains phosphorylated during further breakdown and partitioning of the Golgi fragments in metaphase and anaphase. In telophase, GM130 is dephosphorylated by PP2A as the Golgi fragments start to reassemble. Post-translationally, cleaved by caspases at the onset of apoptosis. Methylation by PRMT5 is required for Golgi ribbon formation. In terms of tissue distribution, widely expressed. Detected in brain, kidney, lung, liver, spleen, heart, skeletal muscle, thymus and pancreas. Detected in spermatocytes. Present in oocytes during all oocyte meiotic maturation (at protein level).

The protein localises to the golgi apparatus. The protein resides in the cis-Golgi network membrane. Its subcellular location is the endoplasmic reticulum-Golgi intermediate compartment membrane. It is found in the cytoplasm. It localises to the cytoskeleton. The protein localises to the spindle pole. Peripheral membrane component of the cis-Golgi stack that acts as a membrane skeleton that maintains the structure of the Golgi apparatus, and as a vesicle thether that facilitates vesicle fusion to the Golgi membrane. Required for normal protein transport from the endoplasmic reticulum to the Golgi apparatus and the cell membrane. Together with p115/USO1 and STX5, involved in vesicle tethering and fusion at the cis-Golgi membrane to maintain the stacked and inter-connected structure of the Golgi apparatus. Plays a central role in mitotic Golgi disassembly: phosphorylation at Ser-37 by CDK1 at the onset of mitosis inhibits the interaction with p115/USO1, preventing tethering of COPI vesicles and thereby inhibiting transport through the Golgi apparatus during mitosis. Also plays a key role in spindle pole assembly and centrosome organization. Promotes the mitotic spindle pole assembly by activating the spindle assembly factor TPX2 to nucleate microtubules around the Golgi and capture them to couple mitotic membranes to the spindle: upon phosphorylation at the onset of mitosis, GOLGA2 interacts with importin-alpha via the nuclear localization signal region, leading to recruit importin-alpha to the Golgi membranes and liberate the spindle assembly factor TPX2 from importin-alpha. TPX2 then activates AURKA kinase and stimulates local microtubule nucleation. Upon filament assembly, nascent microtubules are further captured by GOLGA2, thus linking Golgi membranes to the spindle. Regulates the meiotic spindle pole assembly, probably via the same mechanism. Also regulates the centrosome organization. Also required for the Golgi ribbon formation and glycosylation of membrane and secretory proteins. The chain is Golgin subfamily A member 2 (Golga2) from Mus musculus (Mouse).